A 310-amino-acid polypeptide reads, in one-letter code: Upstream stimulatory factor 1 (310 aa).

Polar residues predominate over residues 1–17; the sequence is MKGQQKTAETEEGTVQI. 2 disordered regions span residues 1 to 26 and 171 to 209; these read MKGQ…ATGE and QGGS…EVER. Positions 190 to 209 are enriched in basic and acidic residues; it reads EAPRTTRDEKRRAQHNEVER. Positions 199–254 constitute a bHLH domain; it reads KRRAQHNEVERRRRDKINNWIVQLSKIIPDCSMESTKSGQSKGGILSKACDYIQEL. Positions 271-292 are leucine-zipper; sequence LQLDNDVLRQQVEDLKNKNLLL. Lys306 participates in a covalent cross-link: Glycyl lysine isopeptide (Lys-Gly) (interchain with G-Cter in SUMO2).

In terms of assembly, efficient DNA binding requires dimerization with another bHLH protein. Binds DNA as a homodimer or a heterodimer (USF1/USF2). Interacts with varicella-zoster virus IE62 protein.

Its subcellular location is the nucleus. Its function is as follows. Transcription factor that binds to a symmetrical DNA sequence (E-boxes) (5'-CACGTG-3') that is found in a variety of viral and cellular promoters. The polypeptide is Upstream stimulatory factor 1 (USF1) (Homo sapiens (Human)).